The chain runs to 110 residues: Replication initiation control protein YabA (110 aa).

4 residues coordinate Zn(2+): histidine 84, cysteine 86, cysteine 100, and cysteine 103.

This sequence belongs to the YabA family. In terms of assembly, homotetramer. Interacts with both DnaA and DnaN, acting as a bridge between these two proteins. Zn(2+) serves as cofactor.

Its subcellular location is the cytoplasm. It localises to the nucleoid. In terms of biological role, involved in control of chromosome replication initiation. Inhibits the cooperative binding of DnaA to the oriC region, thus negatively regulating initiation of chromosome replication. Inhibits the ability of DnaA-ATP to form a helix on DNA; does not disassemble preformed DnaA-DNA helices. Decreases the residence time of DnaA on the chromosome at its binding sites (oriC, replication forks and promoter-binding sites). Tethers DnaA to the replication machinery via the DNA polymerase beta sliding clamp subunit (dnaN). Associates with oriC and other DnaA targets on the chromosome in a DnaA-dependent manner. This Streptococcus mutans serotype c (strain ATCC 700610 / UA159) protein is Replication initiation control protein YabA.